The primary structure comprises 484 residues: Glutamate--tRNA ligase (484 aa).

A 'HIGH' region motif is present at residues 11 to 21 (PSPTGYLHIGN). A 'KMSKS' region motif is present at residues 252–256 (KLSKR). Lys255 contacts ATP.

This sequence belongs to the class-I aminoacyl-tRNA synthetase family. Glutamate--tRNA ligase type 1 subfamily. Monomer.

Its subcellular location is the cytoplasm. It catalyses the reaction tRNA(Glu) + L-glutamate + ATP = L-glutamyl-tRNA(Glu) + AMP + diphosphate. Functionally, catalyzes the attachment of glutamate to tRNA(Glu) in a two-step reaction: glutamate is first activated by ATP to form Glu-AMP and then transferred to the acceptor end of tRNA(Glu). The protein is Glutamate--tRNA ligase of Staphylococcus saprophyticus subsp. saprophyticus (strain ATCC 15305 / DSM 20229 / NCIMB 8711 / NCTC 7292 / S-41).